A 149-amino-acid chain; its full sequence is Transcription antitermination protein NusB (149 aa).

This sequence belongs to the NusB family.

In terms of biological role, involved in transcription antitermination. Required for transcription of ribosomal RNA (rRNA) genes. Binds specifically to the boxA antiterminator sequence of the ribosomal RNA (rrn) operons. The protein is Transcription antitermination protein NusB of Caulobacter vibrioides (strain ATCC 19089 / CIP 103742 / CB 15) (Caulobacter crescentus).